A 1006-amino-acid chain; its full sequence is Unconventional myosin-Id (1006 aa).

The residue at position 2 (A2) is an N-acetylalanine. The region spanning 9 to 695 (FGKADFVLMD…TLFTLEELRA (687 aa)) is the Myosin motor domain. 102–109 (GESGAGKT) serves as a coordination point for ATP. Position 200 is a phosphoserine (S200). At Y536 the chain carries Phosphotyrosine. The interval 572–594 (MIALVDNLASKEPYYVRCIKPND) is actin-binding. 2 consecutive IQ domains span residues 699–719 (IRIVLFLQKVWRGTLARMRYK) and 721–741 (TKAALTIIRYYRHYKVKSYIQ). Residues 812–1005 (GQRADLGLQR…RSGFILSVPG (194 aa)) enclose the TH1 domain.

Belongs to the TRAFAC class myosin-kinesin ATPase superfamily. Myosin family. Interacts (via the two IQ motifs) with calmodulin. Binds an additional calmodulin chain via a third, C-terminal region. Interacts with F-actin.

Its subcellular location is the cytoplasm. The protein resides in the perikaryon. It localises to the cell projection. The protein localises to the dendrite. It is found in the early endosome. Its subcellular location is the cell cortex. In terms of biological role, unconventional myosin that functions as actin-based motor protein with ATPase activity. Plays a role in endosomal protein trafficking, and especially in the transfer of cargo proteins from early to recycling endosomes. Required for normal planar cell polarity in ciliated tracheal cells, for normal rotational polarity of cilia, and for coordinated, unidirectional ciliary movement in the trachea. Required for normal, polarized cilia organization in brain ependymal epithelial cells. This is Unconventional myosin-Id (MYO1D) from Canis lupus familiaris (Dog).